The chain runs to 265 residues: Aquaporin-5 (265 aa).

At 1-12 the chain is on the cytoplasmic side; it reads MKKEVCSLAFFK. A helical membrane pass occupies residues 13–33; sequence AVFAEFLATLIFVFFGLGSAL. The Extracellular segment spans residues 34 to 39; that stretch reads KWPSAL. Residues 40 to 60 form a helical membrane-spanning segment; the sequence is PTILQISIAFGLAIGTLAQAL. Over 61 to 65 the chain is Cytoplasmic; sequence GPVSG. An intramembrane region (discontinuously helical) is located at residues 66–74; that stretch reads GHINPAITL. Positions 69–71 match the NPA 1 motif; the sequence is NPA. Residues 75-87 lie on the Cytoplasmic side of the membrane; sequence ALLIGNQISLLRA. The chain crosses the membrane as a helical span at residues 88–108; it reads VFYVAAQLVGAIAGAGILYWL. Topologically, residues 109 to 126 are extracellular; it reads APLNARGNLAVNALNNNT. The N-linked (GlcNAc...) asparagine glycan is linked to Asn124. The helical transmembrane segment at 127–147 threads the bilayer; the sequence is TPGKAMVVELILTFQLALCIF. Topologically, residues 148–158 are cytoplasmic; the sequence is SSTDSRRTSPV. A helical membrane pass occupies residues 159 to 179; that stretch reads GSPALSIGLSVTLGHLVGIYF. Thr180 is a topological domain (extracellular). The discontinuously helical intramembrane region spans 181–191; the sequence is GCSMNPARSFG. Residues 185-187 carry the NPA 2 motif; sequence NPA. Over 192–203 the chain is Extracellular; sequence PAVVMNRFSPSH. The chain crosses the membrane as a helical span at residues 204 to 224; sequence WVFWVGPIVGAMLAAILYFYL. The Cytoplasmic segment spans residues 225–265; it reads LFPSSLSLHDRVAVVKGTYEPEEDWEDHREERKKTIELTAH.

Belongs to the MIP/aquaporin (TC 1.A.8) family. In terms of assembly, homotetramer; each monomer provides an independent water pore. Interacts with TRPV4; the interaction is probably indirect and regulates TRPV4 activation by hypotonicity. In terms of tissue distribution, salivary glands, lacrimal glands, corneal epithelium in eye, trachea and lung.

It is found in the apical cell membrane. It localises to the cell membrane. The protein localises to the cytoplasmic vesicle membrane. The enzyme catalyses H2O(in) = H2O(out). Functionally, aquaporins form homotetrameric transmembrane channels, with each monomer independently mediating water transport across the plasma membrane along its osmotic gradient. Plays an important role in fluid secretion in salivary glands. Required for TRPV4 activation by hypotonicity. Together with TRPV4, controls regulatory volume decrease in salivary epithelial cells. Seems to play a redundant role in water transport in the eye, lung and in sweat glands. The chain is Aquaporin-5 from Rattus norvegicus (Rat).